The chain runs to 401 residues: S-adenosylmethionine synthase (401 aa).

135 to 140 (GHGSGD) is a binding site for ATP.

It belongs to the AdoMet synthase 2 family. The cofactor is Mg(2+).

The catalysed reaction is L-methionine + ATP + H2O = S-adenosyl-L-methionine + phosphate + diphosphate. The protein operates within amino-acid biosynthesis; S-adenosyl-L-methionine biosynthesis; S-adenosyl-L-methionine from L-methionine: step 1/1. In terms of biological role, catalyzes the formation of S-adenosylmethionine from methionine and ATP. The sequence is that of S-adenosylmethionine synthase from Methanobrevibacter smithii (strain ATCC 35061 / DSM 861 / OCM 144 / PS).